The primary structure comprises 1502 residues: Leucine-rich repeat-containing protein 9 (1502 aa).

LRR repeat units lie at residues 53-79 (FPNLTQLILVGQNIHCIAGLESCHFLK), 97-119 (CADLQKLYLYHNEISVIEGLENL), 120-141 (LKLEVLWLNNNQINVIEGLDMM), 142-164 (QNLKELNLANNLIHSIGESLDPN), 166-188 (QLERLNLSGNKISSFKELTNLAR), 224-247 (LQRLDTYDVSEKQIKNLAESTVVK), 296-320 (EHELTDMKSSGNMQANIPISNKFHE), 699-721 (YSQITVLNLHGNSLSKLKDISRL), 722-744 (NGLRKLIISFNEFSSLEDVSYLT), 746-764 (LEYLDASHNQVITLEGFKG), 765-790 (LGKLKYLDLSWNKLTNSREDLHILRK), 792-814 (AIQLSSLDIRYNFWQKPASVLKD), 822-849 (LTHLNGVTITEDEISEALQISSGSRITQ), 894-916 (YTKITSLTLDSQNLVRITNLEKL), 917-938 (VNLRWASFSSNHLTKIEGLEHC), 939-960 (VNLEELNLDDNSISKLEGLSKL), 961-983 (TKLRRLSINNNLLAGFDRHVIES), 985-1009 (SHLHFLSAENNNISSLAGLQRGYKL), 1011-1030 (ELYLSNNCISSNQEIYSLKG), 1031-1053 (LNNLVILDMWGNPILLKHENYRL), 1100-1123 (FTELQDLNWRTSSIRSIDLVPADH), 1124-1146 (FRNVQTVNLENNNLTSFSGLIFL), 1147-1170 (PNIKNLYLNHNRIESILPQQKSQS), 1209-1232 (MQSLEVLHLGYNGINSLPMLQLGR), 1234-1255 (RNLKSLYLQGNEISHVEGLENL), 1256-1278 (QFLRELVLDHNRIKAIAETSFAK), 1280-1301 (NSLVSLNLEENRLRDLNNLPPL), 1302-1325 (LKLRKLLIGSNKIQEISEIEKLEV), and 1327-1351 (PALVELSISGNPISRKPFLRNLLVV). Residues 317–342 (KFHENNCDTEESNSQQSSERRKNNSD) are disordered. The segment covering 1479 to 1496 (TQQSGQARSQQKHPFNQE) has biased composition (polar residues). The segment at 1479–1502 (TQQSGQARSQQKHPFNQENEGRCV) is disordered.

This chain is Leucine-rich repeat-containing protein 9 (lrrc9), found in Xenopus tropicalis (Western clawed frog).